The following is a 187-amino-acid chain: Large ribosomal subunit protein eL18A (187 aa).

2 positions are modified to phosphoserine: Ser16 and Ser64. Phosphothreonine is present on residues Thr87, Thr89, and Thr134. Residue Ser136 is modified to Phosphoserine. The residue at position 138 (Thr138) is a Phosphothreonine.

The protein belongs to the eukaryotic ribosomal protein eL18 family. In terms of assembly, component of the large ribosomal subunit (LSU). Mature yeast ribosomes consist of a small (40S) and a large (60S) subunit. The 40S small subunit contains 1 molecule of ribosomal RNA (18S rRNA) and at least 33 different proteins. The large 60S subunit contains 3 rRNA molecules (25S, 5.8S and 5S rRNA) and at least 46 different proteins. eL18 interacts with NAP1.

It is found in the cytoplasm. In terms of biological role, component of the ribosome, a large ribonucleoprotein complex responsible for the synthesis of proteins in the cell. The small ribosomal subunit (SSU) binds messenger RNAs (mRNAs) and translates the encoded message by selecting cognate aminoacyl-transfer RNA (tRNA) molecules. The large subunit (LSU) contains the ribosomal catalytic site termed the peptidyl transferase center (PTC), which catalyzes the formation of peptide bonds, thereby polymerizing the amino acids delivered by tRNAs into a polypeptide chain. The nascent polypeptides leave the ribosome through a tunnel in the LSU and interact with protein factors that function in enzymatic processing, targeting, and the membrane insertion of nascent chains at the exit of the ribosomal tunnel. This Schizosaccharomyces pombe (strain 972 / ATCC 24843) (Fission yeast) protein is Large ribosomal subunit protein eL18A (rpl1801).